A 133-amino-acid chain; its full sequence is Large-conductance mechanosensitive channel (133 aa).

The next 2 helical transmembrane spans lie at 10–30 (FAVKGNVVDMAVGIVIGAAFG) and 76–96 (GIFVQTLVDFIIIAFAIFLVV).

The protein belongs to the MscL family. As to quaternary structure, homopentamer.

The protein localises to the cell inner membrane. Functionally, channel that opens in response to stretch forces in the membrane lipid bilayer. May participate in the regulation of osmotic pressure changes within the cell. This is Large-conductance mechanosensitive channel from Chlorobium phaeobacteroides (strain BS1).